We begin with the raw amino-acid sequence, 113 residues long: Hydrogenase maturation factor HybF (113 aa).

Ni(2+) contacts are provided by His-2 and Glu-3. 4 residues coordinate Zn(2+): Cys-73, Cys-76, Cys-89, and Cys-92.

It belongs to the HypA/HybF family. HybF subfamily.

In terms of biological role, involved in the maturation of [NiFe] hydrogenases. Required for nickel insertion into the metal center of the hydrogenase. This Klebsiella pneumoniae protein is Hydrogenase maturation factor HybF.